Here is a 184-residue protein sequence, read N- to C-terminus: Probable RNA 2'-phosphotransferase (184 aa).

This sequence belongs to the KptA/TPT1 family.

Its function is as follows. Removes the 2'-phosphate from RNA via an intermediate in which the phosphate is ADP-ribosylated by NAD followed by a presumed transesterification to release the RNA and generate ADP-ribose 1''-2''-cyclic phosphate (APPR&gt;P). May function as an ADP-ribosylase. This chain is Probable RNA 2'-phosphotransferase, found in Rhizobium leguminosarum bv. trifolii (strain WSM2304).